The sequence spans 273 residues: Large ribosomal subunit protein uL2c (273 aa).

The interval 223 to 273 is disordered; it reads MNPVDHPHGGGEGRAPIGRKKPTTPWGYPALGRRSRKRNKYSDSFILRRRK.

This sequence belongs to the universal ribosomal protein uL2 family. Part of the 50S ribosomal subunit.

The protein resides in the plastid. It is found in the chloroplast. The chain is Large ribosomal subunit protein uL2c (rpl2) from Calycanthus floridus var. glaucus (Eastern sweetshrub).